A 348-amino-acid polypeptide reads, in one-letter code: NAC domain-containing protein 101 (348 aa).

The region spanning 7 to 156 (IPPGYRFHPT…GWVVCRAFKK (150 aa)) is the NAC domain. Residues 107–162 (VGMRKTLVFYKGRAPNGQKSDWIMHEYRLETDENGPPHEEGWVVCRAFKKKLTTMN) mediate DNA binding. A disordered region spans residues 325–348 (MVSMNASSSSSPCSFYSWAQNTHT). Positions 327 to 341 (SMNASSSSSPCSFYS) are enriched in low complexity.

It belongs to the plant vascular related NAC-domain protein family. In terms of assembly, homodimer. In terms of tissue distribution, expressed in root inner metaxylem vessels and in hypocotyl vessels. Present in root developing xylems. Accumulates in the xylem but not in interfascicular fibers or pith cells in inflorescence stems. Absent from secondary xylem in roots.

The protein resides in the nucleus. Its function is as follows. Transcription activator that binds to the secondary wall NAC binding element (SNBE), 5'-(T/A)NN(C/T)(T/C/G)TNNNNNNNA(A/C)GN(A/C/T)(A/T)-3', and to the tracheary elements (TE) specific regulating cis-element (TERE), 5'-CTTNAAAGCNA-3', in the promoter of target genes (e.g. genes involved in secondary wall biosynthesis, cell wall modification such as xylan accumulation, and programmed cell death). Involved in xylem formation in roots and shoots, especially regulating metaxylem vessel differentiation by promoting immature xylem vessel-specific genes expression, especially genes regulating programmed cell death (PCD) and secondary wall formation in tracheary elements (TE). Can activate MYB25, MYB46, MYB58, MYB63, MYB83, MYB103, CESA4, LBD15, LBD30, ERF115, XCP1, XCP2, NAC010/SND3, KNAT7, ASL19 and ASL20 expression. This chain is NAC domain-containing protein 101, found in Arabidopsis thaliana (Mouse-ear cress).